The primary structure comprises 154 residues: MGLSDDEWNHVLGIWAKVEPDLTAHGQEVIIRLFQLHPETQERFAKFKNLTTIDALKSSEEVKKHGTTVLTALGRILKQKNNHEQELKPLAESHATKHKIPVKYLEFICEIIVKVIAEKHPSDFGADSQAAMKKALELFRNDMASKYKEFGFLG.

Residues 2–148 (GLSDDEWNHV…FRNDMASKYK (147 aa)) form the Globin domain. His-65 contributes to the nitrite binding site. His-65 lines the O2 pocket. His-94 contributes to the heme b binding site.

Belongs to the globin family. As to quaternary structure, monomeric.

The protein localises to the cytoplasm. The protein resides in the sarcoplasm. The catalysed reaction is Fe(III)-heme b-[protein] + nitric oxide + H2O = Fe(II)-heme b-[protein] + nitrite + 2 H(+). It catalyses the reaction H2O2 + AH2 = A + 2 H2O. Monomeric heme protein which primary function is to store oxygen and facilitate its diffusion within muscle tissues. Reversibly binds oxygen through a pentacoordinated heme iron and enables its timely and efficient release as needed during periods of heightened demand. Depending on the oxidative conditions of tissues and cells, and in addition to its ability to bind oxygen, it also has a nitrite reductase activity whereby it regulates the production of bioactive nitric oxide. Under stress conditions, like hypoxia and anoxia, it also protects cells against reactive oxygen species thanks to its pseudoperoxidase activity. The protein is Myoglobin (MB) of Chelonia mydas (Green sea-turtle).